Consider the following 472-residue polypeptide: Alanine--anticapsin ligase (472 aa).

Glu109 contributes to the Mg(2+) binding site. ATP is bound by residues Lys138 and Lys178. In terms of domain architecture, ATP-grasp spans 142–355 (RDAFNKAGVK…MAQLLLDVLC (214 aa)). Leu182 provides a ligand contact to Mg(2+). ATP is bound by residues 184–185 (SS), 226–229 (EEFL), and Gln268. Substrate-binding positions include Glu273 and 309-311 (HTE). Residues Glu311 and Glu324 each contribute to the Mg(2+) site. 328–331 (RFAG) contributes to the substrate binding site.

As to quaternary structure, monomer or homodimer. Requires Mg(2+) as cofactor.

The catalysed reaction is L-anticapsin + L-alanine + ATP = bacilysin + ADP + phosphate + H(+). It participates in antibiotic biosynthesis; bacilysin biosynthesis. Functionally, part of the bacABCDEFG operon responsible for the biosynthesis of bacilysin, an irreversible inactivator of the glutaminase domain of glucosamine synthetase. Catalyzes the formation of alpha-dipeptides from various L-amino acids in the presence of ATP. In vivo catalyzes the ligation of L-alanine and L-anticapsin (epoxycyclohexanonyl-Ala) to produce the final bacilysin antibiotic (L-Ala-L-4S-cyclohexenonyl-Ala dipeptide). The substrate specificity is restricted to small amino acids such as L-Ala, for the N-terminal end of the dipeptide, whereas a wide range of hydrophobic amino acids such as L-Phe, L-Tyr and L-Met are recognized for the C-terminal end. In Bacillus subtilis (strain 168), this protein is Alanine--anticapsin ligase.